A 355-amino-acid chain; its full sequence is 3-isopropylmalate dehydrogenase (355 aa).

4 residues coordinate substrate: Arg90, Arg100, Arg128, and Asp222. The Mg(2+) site is built by Asp222, Asp246, and Asp250. 280–292 (GSAPDIAGKGIAN) contacts NAD(+).

It belongs to the isocitrate and isopropylmalate dehydrogenases family. LeuB type 1 subfamily. Homodimer. Mg(2+) is required as a cofactor. Requires Mn(2+) as cofactor.

The protein resides in the cytoplasm. It carries out the reaction (2R,3S)-3-isopropylmalate + NAD(+) = 4-methyl-2-oxopentanoate + CO2 + NADH. Its pathway is amino-acid biosynthesis; L-leucine biosynthesis; L-leucine from 3-methyl-2-oxobutanoate: step 3/4. Its function is as follows. Catalyzes the oxidation of 3-carboxy-2-hydroxy-4-methylpentanoate (3-isopropylmalate) to 3-carboxy-4-methyl-2-oxopentanoate. The product decarboxylates to 4-methyl-2 oxopentanoate. The sequence is that of 3-isopropylmalate dehydrogenase from Burkholderia thailandensis (strain ATCC 700388 / DSM 13276 / CCUG 48851 / CIP 106301 / E264).